We begin with the raw amino-acid sequence, 582 residues long: Frizzled-10 (582 aa).

A signal peptide spans 1–21 (MQHPGPRLWLVLQVMIGSCTA). The Extracellular segment spans residues 22-226 (ISSMDLERPG…DVYWSRDDKR (205 aa)). The 122-residue stretch at 30-151 (PGDGKCQPVE…NDPNYLCMEA (122 aa)) folds into the FZ domain. 5 disulfides stabilise this stretch: cysteine 35–cysteine 96, cysteine 43–cysteine 89, cysteine 80–cysteine 118, cysteine 107–cysteine 148, and cysteine 111–cysteine 135. N-linked (GlcNAc...) asparagine glycosylation is present at asparagine 49. Positions 153–189 (NNGSDEPSRGSGMFPPLFRPQRPHSAQEHPLKDGGPG) are disordered. Asparagine 154 is a glycosylation site (N-linked (GlcNAc...) asparagine). The chain crosses the membrane as a helical span at residues 227–247 (FAVVWLAIWSVLCFFSSAFTV). Residues 248–263 (LTFLIDPSRFRYPERP) lie on the Cytoplasmic side of the membrane. Residues 264-284 (IIFLSMCYCVYSVGYIIRLFA) form a helical membrane-spanning segment. At 285–312 (GAESIACDRDSGQLYVIQEGLESTGCTL) the chain is on the extracellular side. The chain crosses the membrane as a helical span at residues 313-333 (VFLVLYYFGMASSLWWVVLTL). Residues 334–352 (TWFLAAGKKWGHEAIEANS) are Cytoplasmic-facing. Residues 353–373 (SYFHLAAWAIPAVKTILILVM) traverse the membrane as a helical segment. The Extracellular portion of the chain corresponds to 374-394 (RRVAGDELTGVCYVGSMDVNA). Residues 395–415 (LTGFVLVPLACYLVIGTSFIL) form a helical membrane-spanning segment. Over 416-444 (SGFVALFHIRRVMKTGGENTDKLEKLMVR) the chain is Cytoplasmic. A helical transmembrane segment spans residues 445 to 465 (IGVFSLLYTVPATCVIACYFY). Over 466 to 503 (ERLNMDYWKMLATQHKCKMNNQTKTPDCLMTTSIPAVE) the chain is Extracellular. The N-linked (GlcNAc...) asparagine glycan is linked to asparagine 486. Residues 504 to 524 (VFMVKVSMLLVVGITSGVWVW) form a helical membrane-spanning segment. Residues 525–582 (TSKTLQSWQHVCSRGLKRKSRRKPASVVTSAGIYKKAQHPQKPHLGKYELPAQPSACV) are Cytoplasmic-facing. Positions 527–532 (KTLQSW) match the Lys-Thr-X-X-X-Trp motif, mediates interaction with the PDZ domain of Dvl family members motif. The disordered stretch occupies residues 561–582 (AQHPQKPHLGKYELPAQPSACV). The short motif at 580 to 582 (ACV) is the PDZ-binding element.

It belongs to the G-protein coupled receptor Fz/Smo family. As to quaternary structure, interacts with MYOC. Interacts with WNT7B. Ubiquitinated by ZNRF3, leading to its degradation by the proteasome.

It localises to the cell membrane. In terms of biological role, receptor for Wnt proteins. Functions in the canonical Wnt/beta-catenin signaling pathway. The canonical Wnt/beta-catenin signaling pathway leads to the activation of disheveled proteins, inhibition of GSK-3 kinase, nuclear accumulation of beta-catenin and activation of Wnt target genes. A second signaling pathway involving PKC and calcium fluxes has been seen for some family members, but it is not yet clear if it represents a distinct pathway or if it can be integrated in the canonical pathway, as PKC seems to be required for Wnt-mediated inactivation of GSK-3 kinase. Both pathways seem to involve interactions with G-proteins. May be involved in transduction and intercellular transmission of polarity information during tissue morphogenesis and/or in differentiated tissues. This is Frizzled-10 (Fzd10) from Mus musculus (Mouse).